The chain runs to 439 residues: Leukocyte immunoglobulin-like receptor subfamily A member 3 (439 aa).

An N-terminal signal peptide occupies residues 1 to 23 (MTPILTVLICLGLSLDPRTHVQA). 4 Ig-like C2-type domains span residues 27-108 (PKPT…AGLS), 119-224 (TGAY…GVSK), 226-315 (PSLS…DPLD), and 326-415 (PFLS…SDPL). An intrachain disulfide couples C49 to C98. The N-linked (GlcNAc...) asparagine glycan is linked to N140. 3 disulfide bridges follow: C145–C197, C157–C167, and C246–C297. N281, N302, and N341 each carry an N-linked (GlcNAc...) asparagine glycan. The cysteines at positions 346 and 397 are disulfide-linked. N431 is a glycosylation site (N-linked (GlcNAc...) asparagine).

Post-translationally, N-glycosylation is required for ligand binding. In terms of tissue distribution, detected in B-cells, and at lower levels in natural killer (NK) cells. Detected in peripheral blood monocytes and lung.

It is found in the secreted. Functionally, acts as a soluble receptor for class I MHC antigens. Binds both classical and non-classical HLA class I molecules but with reduced affinities compared to LILRB1 or LILRB2. Binds with high affinity to the surface of monocytes, leading to abolish LPS-induced TNF-alpha production by monocytes. In Homo sapiens (Human), this protein is Leukocyte immunoglobulin-like receptor subfamily A member 3 (LILRA3).